The chain runs to 413 residues: 26S proteasome regulatory subunit 6B homolog (413 aa).

Positions 1 to 30 (MATAMVLDPKPAEKLPATRPETSITDVPSD) are disordered. Residues 32–80 (EDDLYARLKSLQRQLEFIEIQEEYVKDELKNLRREHLRAQEEVKRIQSV) are a coiled coil. ATP is bound at residue 201 to 208 (GPPGTGKT).

It belongs to the AAA ATPase family.

The protein localises to the cytoplasm. The protein resides in the nucleus. Its function is as follows. The 26S proteasome is involved in the ATP-dependent degradation of ubiquitinated proteins. The regulatory (or ATPase) complex confers ATP dependency and substrate specificity to the 26S complex. The chain is 26S proteasome regulatory subunit 6B homolog from Solanum tuberosum (Potato).